The chain runs to 277 residues: Large ribosomal subunit protein uL15c (277 aa).

A chloroplast-targeting transit peptide spans 1-67 (MATPLSISSN…FARPLVVVSQ (67 aa)). Thr-68 bears the N-acetylthreonine mark. Positions 81–125 (FRLDNLGPQPGSRKKQKRKGRGISAGQGASCGFGMRGQKSRSGPG) are disordered. The span at 92–101 (SRKKQKRKGR) shows a compositional bias: basic residues. Gly residues predominate over residues 103–115 (ISAGQGASCGFGM).

Belongs to the universal ribosomal protein uL15 family. Part of the 50S ribosomal subunit.

It localises to the plastid. It is found in the chloroplast. This Arabidopsis thaliana (Mouse-ear cress) protein is Large ribosomal subunit protein uL15c (RPL15).